A 392-amino-acid chain; its full sequence is Alpha-(1,3)-fucosyltransferase fut-6 (392 aa).

Residues 1-12 (MSQIGGATCTWR) lie on the Cytoplasmic side of the membrane. Residues 13-35 (YLGRFVTLGIYASVALFVWYTLV) form a helical; Signal-anchor for type II membrane protein membrane-spanning segment. Over 36–392 (PTRSKHKDSI…CNNQIASKYL (357 aa)) the chain is Lumenal. A glycan (N-linked (GlcNAc...) asparagine) is linked at asparagine 158.

It belongs to the glycosyltransferase 10 family. The cofactor is Unlike other alpha-(1,3)-fucosyltransferases, appears not to require a divalent metal cation as cofactor..

It is found in the golgi apparatus. The protein localises to the golgi stack membrane. It functions in the pathway protein modification; protein glycosylation. With respect to regulation, inhibited by divalent metal cations. Its function is as follows. Involved in the fucosylation of N-glycans. Preferentially catalyzes the addition of fucose in alpha 1-3 linkage to the distal GlcNAc residue in N-glycans. Catalyzes the transfer of fucose to Gal-beta-1-4-GlcNAc-alpha-pNP (LN-pNP) and Gal-beta-1-4-GlcNAc-beta-1-3-Gal-beta-1-4-Glc (LNnT). Unlike alpha-(1,3)-fucosyltransferase fut-1, does not transfer fucose to Man-alpha-1-3-(Man-alpha-1-6)-Man-beta-1-4-GlcNAc-beta-1-4-GlcNAc-beta-1-Asn (M3), Man-alpha-1-3-(Man-alpha-1-6)-Man-beta-1-4-GlcNAc-beta-1-4-(Fuc-alpha-1-6)-GlcNAc-beta-1-Asn (M3F6) and GlcNAc-beta-1-2-Man-alpha-1-3-(GlcNAc-beta-1-2-Man-alpha-1-6)-Man-beta-1-4-GlcNAc-beta-1-4(Fuc-alpha-1-6)-GlcNAc-beta-1-Asn (GnM3F6). This chain is Alpha-(1,3)-fucosyltransferase fut-6, found in Caenorhabditis elegans.